Here is a 467-residue protein sequence, read N- to C-terminus: MAAPDLSTNLQEEATCAICLDYFTDPVMTDCGHNFCRECIRRCWGQPEGPYACPECREVSAQRNLRPNRPLAKMAEMARRLHPPSPVPQGVCAAHREPLTTFCGDDLSLLCPTCERSEHWAHRVRPLQEAADDLKGRLEKSLEHLRKQMEDAMLFQAQAEETCALWQKMVESQRQNVLGEFERLRRLLAEEEQQLLQKLEEEELEVLPRLREGAARLGQQSTQLAALVSELESRCQLPALGLLQDIKDALCRVQDVKLQPPAVVPMELRTVCRVPGLVETLRRFRGDITLDPDTANPELVLSEDRRSVQRGEQRQALPDSPERFDPGPCVLGQERITSGRHYWEVEVGDQTSWALGVCKETVNRKEKGELSAGNGFWILVFLGSFYNSNERAFSPLRDPPKRVGIFLDYEAGHLSFYSATDGSLLFIFPETPFSGTLRPLFSPLSSSPTPMTICRLIGVSGDTLGPQ.

Residues 16–57 (CAICLDYFTDPVMTDCGHNFCRECIRRCWGQPEGPYACPECR) form an RING-type zinc finger. Ser85 carries the post-translational modification Phosphoserine. Residues 87-127 (VPQGVCAAHREPLTTFCGDDLSLLCPTCERSEHWAHRVRPL) form a B box-type zinc finger. 4 residues coordinate Zn(2+): Cys92, His95, Cys114, and His119. Residues 127–207 (LQEAADDLKG…KLEEEELEVL (81 aa)) adopt a coiled-coil conformation. Residues 267-460 (ELRTVCRVPG…MTICRLIGVS (194 aa)) enclose the B30.2/SPRY domain. Positions 304-313 (DRRSVQRGEQ) are enriched in basic and acidic residues. The segment at 304-325 (DRRSVQRGEQRQALPDSPERFD) is disordered.

The protein belongs to the TRIM/RBCC family. Binds cytoplasmic tail of integrin alpha-1. Interacts with the HN peptide. Interacts with PHOX2B. Interacts (when autoubiquitinated) with SQSTM1/p62; promoting AIM2 recruitment to autophagosomes. Interacts with AIM2; promoting its autophagy-dependent degradation. In terms of processing, autoubiquitinated upon DNA stimulation; autoubiquitination promotes interaction with SQSTM1/p62 and recruitment of AIM2 to autophagosomes.

Its subcellular location is the cytoplasm. It localises to the nucleus. The enzyme catalyses S-ubiquitinyl-[E2 ubiquitin-conjugating enzyme]-L-cysteine + [acceptor protein]-L-lysine = [E2 ubiquitin-conjugating enzyme]-L-cysteine + N(6)-ubiquitinyl-[acceptor protein]-L-lysine.. It functions in the pathway protein modification; protein ubiquitination. Its function is as follows. E3 ubiquitin-protein ligase that promotes the degradation of insoluble ubiquitinated proteins, including insoluble PAX6, poly-Gln repeat expanded HTT and poly-Ala repeat expanded ARX. Mediates PAX6 ubiquitination leading to proteasomal degradation, thereby modulating cortical neurogenesis. May also inhibit PAX6 transcriptional activity, possibly in part by preventing the binding of PAX6 to its consensus sequences. May contribute to the regulation of the intracellular level of HN (humanin) or HN-containing proteins through the proteasomal degradation pathway. Mediates MED15 ubiquitination leading to proteasomal degradation. May contribute to the innate restriction of retroviruses. Upon overexpression, reduces HIV-1 and murine leukemia virus infectivity, by suppressing viral gene expression. Antiviral activity depends on a functional E3 ubiquitin-protein ligase domain. May regulate TRIM5 turnover via the proteasome pathway, thus counteracting the TRIM5-mediated cross-species restriction of retroviral infection at early stages of the retroviral life cycle. Acts as an inhibitor of the AIM2 inflammasome by promoting autophagy-dependent degradation of AIM2. Mechanistically, undergoes autoubiquitination upon DNA stimulation, promoting interaction with AIM2 and SQSTM1/p62, leading to AIM2 recruitment to autophagosomes. The protein is E3 ubiquitin-protein ligase TRIM11 (Trim11) of Rattus norvegicus (Rat).